The following is a 251-amino-acid chain: Carbohydrate deacetylase (251 aa).

Residues H59 and H122 each coordinate Mg(2+).

The protein belongs to the YdjC deacetylase family. In terms of assembly, homodimer. The cofactor is Mg(2+).

Functionally, probably catalyzes the deacetylation of acetylated carbohydrates an important step in the degradation of oligosaccharides. The sequence is that of Carbohydrate deacetylase from Vibrio parahaemolyticus serotype O3:K6 (strain RIMD 2210633).